Reading from the N-terminus, the 247-residue chain is Phosphoribosylaminoimidazole-succinocarboxamide synthase (247 aa).

This sequence belongs to the SAICAR synthetase family.

The catalysed reaction is 5-amino-1-(5-phospho-D-ribosyl)imidazole-4-carboxylate + L-aspartate + ATP = (2S)-2-[5-amino-1-(5-phospho-beta-D-ribosyl)imidazole-4-carboxamido]succinate + ADP + phosphate + 2 H(+). It participates in purine metabolism; IMP biosynthesis via de novo pathway; 5-amino-1-(5-phospho-D-ribosyl)imidazole-4-carboxamide from 5-amino-1-(5-phospho-D-ribosyl)imidazole-4-carboxylate: step 1/2. The polypeptide is Phosphoribosylaminoimidazole-succinocarboxamide synthase (Synechococcus sp. (strain JA-2-3B'a(2-13)) (Cyanobacteria bacterium Yellowstone B-Prime)).